A 508-amino-acid chain; its full sequence is Cytochrome P450 monooxygenase BipB (508 aa).

Residues glutamate 11 to tyrosine 31 form a helical membrane-spanning segment. Cysteine 448 is a binding site for heme.

It belongs to the cytochrome P450 family. Heme is required as a cofactor.

It is found in the membrane. Its pathway is sesquiterpene biosynthesis. Cytochrome P450 monooxygenase; part of the minimal biosynthetic bip cluster that mediates the biosynthesis of bridged polycyclic sesquiterpenoids derived from sativene, isosativene, and longifolene. The sesquiterpene cyclase BipA acts as a versatile cyclase that converts farnesyl diphosphate (FPP) into (-)-sativene as the dominant product and (-)-isosativene and (-)-longifolene as minor ones. The cytochrome P450 monooxygenase BipB then hydroxylates different enantiomeric sesquiterpenes, such as (-)-longifolene and (+)-longifolene, at C-15 and C-14. The C-15- or both C-15- and C-14-hydroxylated products are further oxidized by unclustered oxidases, resulting in a structurally diverse array of sesquiterpenoids. The BipB-catalyzed hydroxylation at C-15 serves as an initiator for the oxidation by the unclustered oxidases. The chain is Cytochrome P450 monooxygenase BipB from Cochliobolus sativus (Common root rot and spot blotch fungus).